A 260-amino-acid polypeptide reads, in one-letter code: Universal stress protein PHOS34 (260 aa).

Residues M1–S33 constitute a chloroplast transit peptide. The segment at M1–G42 is disordered. Over residues K14–S28 the composition is skewed to basic residues. P18 provides a ligand contact to ATP. Position 20 is a phosphoserine; by MAPK3 and MAPK6 (S20). The span at S29–A41 shows a compositional bias: low complexity. V80 contacts ATP. Residues G92–D118 form a disordered region. ATP is bound by residues G170–R179 and S187–S189. The disordered stretch occupies residues R209–E260. The residue at position 230 (S230) is a Phosphoserine. Basic and acidic residues predominate over residues S251–E260.

The protein belongs to the universal stress protein A family. In terms of processing, phosphorylated by MAPK3 and MAPK6 after pathogenic elicitation (e.g. bacterial flg22, Phytophthora infestans zoospores and xylanase).

The protein resides in the plastid. It is found in the chloroplast. This chain is Universal stress protein PHOS34, found in Arabidopsis thaliana (Mouse-ear cress).